The chain runs to 318 residues: tRNA uridine(34) hydroxylase (318 aa).

Positions 123 to 217 (EDDDTVIIDA…YGKDPETKGE (95 aa)) constitute a Rhodanese domain. The active-site Cysteine persulfide intermediate is cysteine 177.

It belongs to the TrhO family.

The catalysed reaction is uridine(34) in tRNA + AH2 + O2 = 5-hydroxyuridine(34) in tRNA + A + H2O. Catalyzes oxygen-dependent 5-hydroxyuridine (ho5U) modification at position 34 in tRNAs. The chain is tRNA uridine(34) hydroxylase from Staphylococcus aureus (strain MSSA476).